A 260-amino-acid chain; its full sequence is Ribonuclease PH (260 aa).

Residues arginine 87 and 125 to 127 (GTR) each bind phosphate. The interval 232-260 (LAAPPAAGPPAPERAGAGSGSGGKGTGSR) is disordered. Residues 248-260 (AGSGSGGKGTGSR) show a composition bias toward gly residues.

This sequence belongs to the RNase PH family. In terms of assembly, homohexameric ring arranged as a trimer of dimers.

It carries out the reaction tRNA(n+1) + phosphate = tRNA(n) + a ribonucleoside 5'-diphosphate. In terms of biological role, phosphorolytic 3'-5' exoribonuclease that plays an important role in tRNA 3'-end maturation. Removes nucleotide residues following the 3'-CCA terminus of tRNAs; can also add nucleotides to the ends of RNA molecules by using nucleoside diphosphates as substrates, but this may not be physiologically important. Probably plays a role in initiation of 16S rRNA degradation (leading to ribosome degradation) during starvation. The sequence is that of Ribonuclease PH from Parafrankia sp. (strain EAN1pec).